A 295-amino-acid polypeptide reads, in one-letter code: Aquaporin-9 (295 aa).

Over 1-24 (MPSEKDRAKKNLVQRLALKSCLAK) the chain is Cytoplasmic. Residues 25–43 (ETLSEFLGTFIMIVLGCGS) form a helical membrane-spanning segment. Over 44 to 57 (IAQAVLSREKAGGI) the chain is Extracellular. A helical membrane pass occupies residues 58 to 77 (ITINIGFATAVVMALYATFG). The Cytoplasmic portion of the chain corresponds to 78 to 79 (VS). An intramembrane region (discontinuously helical) is located at residues 80-92 (GGHINPAVSFAMC). Residues 84–86 (NPA) carry the NPA 1 motif. Residues 93–98 (TFGRME) are Cytoplasmic-facing. Residues 99 to 123 (WFKFPFYVGAQLLGAFVGAATVFGI) traverse the membrane as a helical segment. Over 124-160 (YYDGLMAFADGKLLITGENGTAFIFATYPKPFVSVPG) the chain is Extracellular. The helical transmembrane segment at 161-178 (AFVDQVVSTMFLLLIVFA) threads the bilayer. The Cytoplasmic segment spans residues 179-190 (IFDSRNLGVPRG). A helical membrane pass occupies residues 191-207 (LEPIVIGLLIIVISCSL). Over 208-210 (GLN) the chain is Extracellular. An intramembrane region (discontinuously helical) is located at residues 211 to 225 (SGCAMNPARDLSPRL). An NPA 2 motif is present at residues 216-218 (NPA). At 226 to 243 (FTALAGWGFEVFTFGNNF) the chain is on the extracellular side. The helical transmembrane segment at 244 to 264 (WWIPVVGPMIGAVLGGLIYVL) threads the bilayer. Residues 265 to 295 (FIQMHHSNPDPEVKAEPAENNLEKHELSVIM) lie on the Cytoplasmic side of the membrane.

The protein belongs to the MIP/aquaporin (TC 1.A.8) family. In terms of assembly, homotetramer; each monomer provides an independent glycerol/water pore.

The protein resides in the cell membrane. It localises to the basolateral cell membrane. It carries out the reaction glycerol(in) = glycerol(out). The catalysed reaction is H2O(in) = H2O(out). The enzyme catalyses urea(in) = urea(out). It catalyses the reaction (S)-lactate(in) = (S)-lactate(out). It carries out the reaction NH4(+)(in) = NH4(+)(out). The catalysed reaction is uracil(in) = uracil(out). The enzyme catalyses adenine(out) = adenine(in). It catalyses the reaction 3-hydroxybutanoate(in) = 3-hydroxybutanoate(out). It carries out the reaction D-sorbitol(in) = D-sorbitol(out). The catalysed reaction is D-mannitol(in) = D-mannitol(out). The enzyme catalyses H2O2(out) = H2O2(in). It catalyses the reaction arsenite(in) = arsenite(out). It carries out the reaction selenite(in) = selenite(out). Aquaglyceroporins form homotetrameric transmembrane channels, with each monomer independently mediating glycerol and water transport across the plasma membrane along their osmotic gradient. AQP9 is the primary route for glycerol uptake in hepatocytes, supporting hepatic gluconeogenesis. It exhibits broad specificity and may transport various small, non-charged solutes, including carbamides, polyols, purines, and pyrimidines. AQP9 may also facilitate hepatic urea extrusion. Due to its permeability to lactate, AQP9 might participate in the astrocyte-to-neuron lactate shuttle, supplying neurons with energy. Additionally, AQP9 is permeable to arsenite, contributing to arsenic excretion by the liver and providing partial protection against arsenic toxicity. It is also permeable to H2O2 in vivo. Could also be permeable to ammonium. This chain is Aquaporin-9, found in Mus musculus (Mouse).